The sequence spans 551 residues: MFS efflux transporter aclA (551 aa).

8 consecutive transmembrane segments (helical) span residues 26-46 (WAVFVSLCFASFVASLDITAI), 64-84 (VWIANSYTLASAVVQPLIGQI), 93-113 (PMIILMCLFALGSGICGGATS), 125-145 (GLGAGGILLLLEVIVCDLVPL), 154-174 (IALSTCALGISLGPLVGGALV), 181-201 (WVFYINLPCAGVALVALVLCL), 220-240 (WVGNTIFIAAICAIMYALVIG), and 251-271 (VLVPLVLGAFGWVLFHIFEAS). Residue Asn286 is glycosylated (N-linked (GlcNAc...) asparagine). The next 6 membrane-spanning stretches (helical) occupy residues 294 to 314 (VLAFLAAMLMQWVVYFLTLFF), 327 to 347 (VDVIPFTGFMIPSAIVGGAIM), 356 to 376 (LHWAGFALLSICMGVFSTWDA), 385 to 405 (ILQCLVGLGHGLLLTSVLPAI), 420 to 440 (AYAFLRSFGFVWGVEIPAVVF), and 492 to 512 (LRTVWQVGMAFALLGFALVVV).

This sequence belongs to the major facilitator superfamily.

It localises to the membrane. In terms of biological role, MFS efflux transporter; part of the gene cluster that mediates the biosynthesis of aspirochlorine (or antibiotic A30641), an unusual halogenated spiro compound with distinctive antifungal properties due to selective inhibition of protein biosynthesis, and which is also active against bacteria, viruses, and murine tumor cells. This is MFS efflux transporter aclA from Aspergillus oryzae (strain ATCC 42149 / RIB 40) (Yellow koji mold).